The primary structure comprises 182 residues: Doublesex- and mab-3-related transcription factor C1 (182 aa).

T15 bears the Phosphoserine mark. Polar residues predominate over residues 26-39 (AQVDTATQEESSQG). Disordered stretches follow at residues 26–48 (AQVD…QHPE) and 136–174 (QTRH…PSGH).

It belongs to the DMRT family. In terms of tissue distribution, expressed in Sertoli cells in male testis.

This chain is Doublesex- and mab-3-related transcription factor C1 (Dmrtc1), found in Mus musculus (Mouse).